A 161-amino-acid polypeptide reads, in one-letter code: Small ribosomal subunit protein uS9 (161 aa).

Belongs to the universal ribosomal protein uS9 family.

The protein is Small ribosomal subunit protein uS9 (rpsI) of Rickettsia prowazekii (strain Madrid E).